We begin with the raw amino-acid sequence, 101 residues long: NAD(P)H-quinone oxidoreductase subunit 4L, chloroplastic (101 aa).

Transmembrane regions (helical) follow at residues 2-22, 32-52, and 61-81; these read MLEH…YGLI, MCLE…SDLF, and IFSI…LAIV.

It belongs to the complex I subunit 4L family. As to quaternary structure, NDH is composed of at least 16 different subunits, 5 of which are encoded in the nucleus.

The protein localises to the plastid. It localises to the chloroplast thylakoid membrane. It catalyses the reaction a plastoquinone + NADH + (n+1) H(+)(in) = a plastoquinol + NAD(+) + n H(+)(out). It carries out the reaction a plastoquinone + NADPH + (n+1) H(+)(in) = a plastoquinol + NADP(+) + n H(+)(out). Functionally, NDH shuttles electrons from NAD(P)H:plastoquinone, via FMN and iron-sulfur (Fe-S) centers, to quinones in the photosynthetic chain and possibly in a chloroplast respiratory chain. The immediate electron acceptor for the enzyme in this species is believed to be plastoquinone. Couples the redox reaction to proton translocation, and thus conserves the redox energy in a proton gradient. This Nandina domestica (Heavenly bamboo) protein is NAD(P)H-quinone oxidoreductase subunit 4L, chloroplastic.